Here is a 380-residue protein sequence, read N- to C-terminus: Lipid-A-disaccharide synthase (380 aa).

The protein belongs to the LpxB family.

The enzyme catalyses a lipid X + a UDP-2-N,3-O-bis[(3R)-3-hydroxyacyl]-alpha-D-glucosamine = a lipid A disaccharide + UDP + H(+). The protein operates within bacterial outer membrane biogenesis; LPS lipid A biosynthesis. In terms of biological role, condensation of UDP-2,3-diacylglucosamine and 2,3-diacylglucosamine-1-phosphate to form lipid A disaccharide, a precursor of lipid A, a phosphorylated glycolipid that anchors the lipopolysaccharide to the outer membrane of the cell. The polypeptide is Lipid-A-disaccharide synthase (Azotobacter vinelandii (strain DJ / ATCC BAA-1303)).